A 495-amino-acid chain; its full sequence is Pentatricopeptide repeat-containing protein PPR5 homolog, chloroplastic (495 aa).

The disordered stretch occupies residues 1–24 (MLAYPTTSSPWPPRHHGAAAAPAA). A chloroplast-targeting transit peptide spans 1 to 29 (MLAYPTTSSPWPPRHHGAAAAPAARRHMA). 9 PPR repeats span residues 120-154 (DNGIYSKLISVMGRKGQIRMAMWLFSQMRNSGCRP), 155-189 (DTSVYNSLIGTHLHSRDKSKALAKALGYFEKMKTI), 195-229 (NIVTYNILLRAFAQAGDTKQLDILFKDLDESPVSP), 230-264 (DIYTYNGVMDAYGKNGMITEMESVLVRMKSNQCRP), 265-299 (DVITFNILIDSYGRKQAFDKMEQVFKSLLRSKEKP), 300-334 (THPTFNSMITNYGKARLREKAECVLDKMTEMGFKP), 335-365 (NYVTQECLIMMYAYCDCVSRARQIFDELVSS), 370-404 (HLSSVNAMLDAYCMNGLPMEADQLLDSVIKKGAVP), and 405-439 (SASTYKLLYKAYTKANDKKLIQKLLKRMNSQGIVP). The segment at 455 to 495 (DKKPRTVPSKNSASKPDVESANNSGTDTSSKPNLSVWQVAA) is disordered. Residues 462-495 (PSKNSASKPDVESANNSGTDTSSKPNLSVWQVAA) are compositionally biased toward polar residues.

It belongs to the PPR family. P subfamily.

The protein localises to the plastid. It localises to the chloroplast. Functionally, involved in the biogenesis of the plastid translation machinery by promoting the splicing of group II introns in chloroplasts. The polypeptide is Pentatricopeptide repeat-containing protein PPR5 homolog, chloroplastic (Oryza sativa subsp. japonica (Rice)).